We begin with the raw amino-acid sequence, 180 residues long: Vacuolar ATPase assembly protein VMA22 (180 aa).

A coiled-coil region spans residues 16–37; sequence QLLGDLEELEGKRTVLNARVEE. Over residues 92-101 the composition is skewed to basic and acidic residues; sequence EEVGPREAGL. The segment at 92 to 122 is disordered; the sequence is EEVGPREAGLRRRKGPTKTPEPESSEAPQDP. Residues 153 to 176 are a coiled coil; sequence SLQNRIDWGRSQLRGLQEKLKQLE.

In terms of assembly, accessory component of the multisubunit proton-transporting vacuolar (V)-ATPase protein pump. Expressed throughout the brain.

The protein resides in the endosome. The protein localises to the lysosome. Its subcellular location is the endoplasmic reticulum-Golgi intermediate compartment. It is found in the cytoplasmic vesicle. It localises to the COPI-coated vesicle. The protein resides in the endoplasmic reticulum. In terms of biological role, accessory component of the proton-transporting vacuolar (V)-ATPase protein pump involved in intracellular iron homeostasis. In aerobic conditions, required for intracellular iron homeostasis, thus triggering the activity of Fe(2+) prolyl hydroxylase (PHD) enzymes, and leading to HIF1A hydroxylation and subsequent proteasomal degradation. Necessary for endolysosomal acidification and lysosomal degradation. May be involved in Golgi homeostasis. The polypeptide is Vacuolar ATPase assembly protein VMA22 (Homo sapiens (Human)).